The following is a 491-amino-acid chain: UDP-N-acetylmuramoyl-L-alanyl-D-glutamate--2,6-diaminopimelate ligase (491 aa).

Ser30 is a UDP-N-acetyl-alpha-D-muramoyl-L-alanyl-D-glutamate binding site. 108–114 contributes to the ATP binding site; the sequence is GTNGKTT. Residues Asn149, 150-151, Ser177, Gln183, and Arg185 contribute to the UDP-N-acetyl-alpha-D-muramoyl-L-alanyl-D-glutamate site; that span reads TT. Lys217 bears the N6-carboxylysine mark. Meso-2,6-diaminopimelate is bound by residues Arg383, 407 to 410, Gly458, and Glu462; that span reads DNPR. The Meso-diaminopimelate recognition motif motif lies at 407–410; that stretch reads DNPR.

The protein belongs to the MurCDEF family. MurE subfamily. It depends on Mg(2+) as a cofactor. In terms of processing, carboxylation is probably crucial for Mg(2+) binding and, consequently, for the gamma-phosphate positioning of ATP.

The protein localises to the cytoplasm. It carries out the reaction UDP-N-acetyl-alpha-D-muramoyl-L-alanyl-D-glutamate + meso-2,6-diaminopimelate + ATP = UDP-N-acetyl-alpha-D-muramoyl-L-alanyl-gamma-D-glutamyl-meso-2,6-diaminopimelate + ADP + phosphate + H(+). Its pathway is cell wall biogenesis; peptidoglycan biosynthesis. Its function is as follows. Catalyzes the addition of meso-diaminopimelic acid to the nucleotide precursor UDP-N-acetylmuramoyl-L-alanyl-D-glutamate (UMAG) in the biosynthesis of bacterial cell-wall peptidoglycan. This chain is UDP-N-acetylmuramoyl-L-alanyl-D-glutamate--2,6-diaminopimelate ligase, found in Listeria monocytogenes serovar 1/2a (strain ATCC BAA-679 / EGD-e).